A 281-amino-acid chain; its full sequence is Undecaprenyl-diphosphatase (281 aa).

7 consecutive transmembrane segments (helical) span residues 45 to 65 (AFTN…VVVI), 86 to 106 (WQLW…GLIF), 114 to 134 (FQNF…FIYV), 148 to 168 (LVSL…LSLI), 196 to 216 (FFLG…KFIV), 224 to 244 (SQLF…LYVI), and 256 to 276 (FTFF…YGLM).

This sequence belongs to the UppP family.

Its subcellular location is the cell membrane. It carries out the reaction di-trans,octa-cis-undecaprenyl diphosphate + H2O = di-trans,octa-cis-undecaprenyl phosphate + phosphate + H(+). Catalyzes the dephosphorylation of undecaprenyl diphosphate (UPP). Confers resistance to bacitracin. The protein is Undecaprenyl-diphosphatase of Streptococcus mutans serotype c (strain ATCC 700610 / UA159).